The primary structure comprises 166 residues: Phosphodiesterase MJ0936 (166 aa).

Asp8, His10, Asp36, Asn59, His97, His120, and His122 together coordinate Mn(2+). Residues Asp8, His10, Asp36, Asn59, His97, His120, and His122 each coordinate Ni(2+).

It belongs to the metallophosphoesterase superfamily. YfcE family. Monomer. Requires Ni(2+) as cofactor. It depends on Mn(2+) as a cofactor.

With respect to regulation, competitively inhibited by phosphate. Functionally, shows phosphodiesterase activity. Hydrolyzes phosphodiesters bonds in the artificial chromogenic substrates bis-p-nitrophenyl phosphate (bis-pNPP), and less efficiently thymidine 5'-monophosphate p-nitrophenyl ester (pNP-TMP) and p-nitrophenylphosphorylcholine (pNPPC). No catalytic activity was found toward cAMP or cGMP, nucleotides or phospholipase substrates such as phosphatidylcholine. The physiological substrate is unknown. The chain is Phosphodiesterase MJ0936 from Methanocaldococcus jannaschii (strain ATCC 43067 / DSM 2661 / JAL-1 / JCM 10045 / NBRC 100440) (Methanococcus jannaschii).